The sequence spans 274 residues: MIVFPNAKINLGLQVVAKRADGYHNIETVFYPIPLTDALEIEVREDTCDRLSVHGIPIDAATEDNLVMKAILALRRKFDFPPLTIELIKHIPSGAGLGGGSSNASFMLKLVRDYFSLPIDDKELAAIALTIGADCPFFVGNRPVLATDLGQVFTPLPNFSLSGLHIAIVKPPIHINTAAAYKGLKHVGKRETMPDEIVYMPVDEWRGKLVNDFEESLFPEHPRLAELKEMLYRSGALYAAMSGSGSALFGLFREKPQLDKAAITDCFRWQSIIP.

Lys8 is a catalytic residue. 92–102 (PSGAGLGGGSS) is a binding site for ATP. Asp134 is an active-site residue.

It belongs to the GHMP kinase family. IspE subfamily.

The catalysed reaction is 4-CDP-2-C-methyl-D-erythritol + ATP = 4-CDP-2-C-methyl-D-erythritol 2-phosphate + ADP + H(+). It participates in isoprenoid biosynthesis; isopentenyl diphosphate biosynthesis via DXP pathway; isopentenyl diphosphate from 1-deoxy-D-xylulose 5-phosphate: step 3/6. Its function is as follows. Catalyzes the phosphorylation of the position 2 hydroxy group of 4-diphosphocytidyl-2C-methyl-D-erythritol. This chain is 4-diphosphocytidyl-2-C-methyl-D-erythritol kinase, found in Porphyromonas gingivalis (strain ATCC 33277 / DSM 20709 / CIP 103683 / JCM 12257 / NCTC 11834 / 2561).